A 650-amino-acid polypeptide reads, in one-letter code: MAAKSDGRLKMKKSSDVAFTPLQNSDHSGSVQGLAPGLPSGSGAEDEEAAGGGCCPDGGGCSRCCCCCAGSGGSAGSGGSGGVAGPGGGGAGSAALCLRLGREQRRYSLWDCLWILAAVAVYFADVGTDVWLAVDYYLRGQRWWFGLTLFFVVLGSLSVQVFSFRWFVHDFSTEDSATAAAASSCPQPGADCKTVVGGGSAAGEGEARPSTPQRQASNASKSNIAAANSGSNSSGATRASGKHRSASCSFCIWLLQSLIHILQLGQIWRYFHTIYLGIRSRQSGENDRWRFYWKMVYEYADVSMLHLLATFLESAPQLVLQLCIIVQTHSLQALQGFTAAASLVSLAWALASYQKALRDSRDDKKPISYMAVIIQFCWHFFTIAARVITFALFASVFQLYFGIFIVLHWCIMTFWIVHCETEFCITKWEEIVFDMVVGIIYIFSWFNVKEGRTRCRLFIYYFVILLENTALSALWYLYKAPQIADAFAIPALCVVFSSFLTGVVFMLMYYAFFHPNGPRFGQSPSCACEDPAAAFTLPPDVATSTLRSISNNRSVVSDRDQKFAERDGCVPVFQVRPTAPSTPSSRPPRIEESVIKIDLFRNRYPAWERHVLDRSLRKAILAFECSPSPPRLQYKDDALIQERLEYETTL.

The span at 1-15 (MAAKSDGRLKMKKSS) shows a compositional bias: basic and acidic residues. The tract at residues 1-44 (MAAKSDGRLKMKKSSDVAFTPLQNSDHSGSVQGLAPGLPSGSGA) is disordered. The span at 21-31 (PLQNSDHSGSV) shows a compositional bias: polar residues. A run of 2 helical transmembrane segments spans residues 114–134 (WILAAVAVYFADVGTDVWLAV) and 144–164 (WFGLTLFFVVLGSLSVQVFSF). Phosphoserine is present on Ser-200. The segment at 200–238 (SAAGEGEARPSTPQRQASNASKSNIAAANSGSNSSGATR) is disordered. Residues 216-238 (ASNASKSNIAAANSGSNSSGATR) show a composition bias toward low complexity. 8 helical membrane-spanning segments follow: residues 248-268 (CSFCIWLLQSLIHILQLGQIW), 306-326 (HLLATFLESAPQLVLQLCIIV), 331-351 (LQALQGFTAAASLVSLAWALA), 365-385 (KPISYMAVIIQFCWHFFTIAA), 396-418 (VFQLYFGIFIVLHWCIMTFWIVH), 428-448 (WEEIVFDMVVGIIYIFSWFNV), 457-477 (LFIYYFVILLENTALSALWYL), and 487-507 (FAIPALCVVFSSFLTGVVFML).

This sequence belongs to the XK family. Homodimer; homodimerization takes place upon caspase cleavage. Interacts with the processed C-terminus of XRCC4 (protein XRCC4, C-terminus); interaction promotes the phospholipid scramblase activity. In terms of processing, undergoes proteolytic processing by caspase-3 (CASP3), caspase-6 (CASP6) and caspase-7 (CASP7) to generate the XK-related protein 4, processed form, leading to its activation.

The protein localises to the cell membrane. The catalysed reaction is a 1,2-diacyl-sn-glycero-3-phospho-L-serine(in) = a 1,2-diacyl-sn-glycero-3-phospho-L-serine(out). Phospholipid scramblase activity is activated upon caspase cleavage to generate the XK-related protein 4, processed form. Does not act prior the onset of apoptosis. Its activity is regulated as follows. Homodimerizes upon caspase cleavage. Phospholipid scramblase activity is activated following interaction with the processed C-terminus of XRCC4 (protein XRCC4, C-terminus). Its function is as follows. Phospholipid scramblase that promotes phosphatidylserine exposure on apoptotic cell surface. Phosphatidylserine is a specific marker only present at the surface of apoptotic cells and acts as a specific signal for engulfment. The polypeptide is XK-related protein 4 (Homo sapiens (Human)).